The sequence spans 313 residues: Ribosomal RNA small subunit methyltransferase H (313 aa).

Residues 35–37 (GGH), D55, F79, D100, and Q107 each bind S-adenosyl-L-methionine.

It belongs to the methyltransferase superfamily. RsmH family.

The protein localises to the cytoplasm. It carries out the reaction cytidine(1402) in 16S rRNA + S-adenosyl-L-methionine = N(4)-methylcytidine(1402) in 16S rRNA + S-adenosyl-L-homocysteine + H(+). Specifically methylates the N4 position of cytidine in position 1402 (C1402) of 16S rRNA. This Burkholderia orbicola (strain AU 1054) protein is Ribosomal RNA small subunit methyltransferase H.